Reading from the N-terminus, the 528-residue chain is Na(+)/H(+) antiporter NhaB (528 aa).

The next 10 helical transmembrane spans lie at 25-47 (IISFLVINPIVFYFNPFIAGWLL), 66-86 (PGGLLAIEAVAIGMTSPSQVL), 97-117 (LLLVFMVAGIYFMKQLLLFVF), 130-164 (VSLLFCVSSAFLSAFLDALTVIAVIITVAVGFYSI), 241-261 (IRMSPVTVPVFFAGVTTCFLV), 304-324 (AFIGVWLIAGLALHLASVGLI), 351-371 (ALPFTALLAVFFAIVAVIIDL), 390-410 (LVVFYIANGLLSMVSDNVFVG), 448-468 (ATPNGQAAFLFLLTSAIAPLI), and 476-496 (VWMALPYTIVLSIVGVLAIQL).

This sequence belongs to the NhaB Na(+)/H(+) (TC 2.A.34) antiporter family.

It localises to the cell inner membrane. It carries out the reaction 2 Na(+)(in) + 3 H(+)(out) = 2 Na(+)(out) + 3 H(+)(in). Functionally, na(+)/H(+) antiporter that extrudes sodium in exchange for external protons. The sequence is that of Na(+)/H(+) antiporter NhaB from Shewanella halifaxensis (strain HAW-EB4).